A 291-amino-acid polypeptide reads, in one-letter code: 4-diphosphocytidyl-2-C-methyl-D-erythritol kinase (291 aa).

The active site involves lysine 11. ATP is bound at residue 97-107 (PVAAGIGGGSS). Aspartate 139 is a catalytic residue.

This sequence belongs to the GHMP kinase family. IspE subfamily.

The catalysed reaction is 4-CDP-2-C-methyl-D-erythritol + ATP = 4-CDP-2-C-methyl-D-erythritol 2-phosphate + ADP + H(+). It participates in isoprenoid biosynthesis; isopentenyl diphosphate biosynthesis via DXP pathway; isopentenyl diphosphate from 1-deoxy-D-xylulose 5-phosphate: step 3/6. In terms of biological role, catalyzes the phosphorylation of the position 2 hydroxy group of 4-diphosphocytidyl-2C-methyl-D-erythritol. This is 4-diphosphocytidyl-2-C-methyl-D-erythritol kinase from Methylorubrum extorquens (strain PA1) (Methylobacterium extorquens).